Reading from the N-terminus, the 366-residue chain is tRNA-queuosine alpha-mannosyltransferase (366 aa).

The protein belongs to the glycosyltransferase group 1 family. Glycosyltransferase 4 subfamily.

It localises to the cytoplasm. Its subcellular location is the nucleus. The catalysed reaction is queuosine(34) in tRNA(Asp) + GDP-alpha-D-mannose = O-4''-alpha-D-mannosylqueuosine(34) in tRNA(Asp) + GDP + H(+). Its function is as follows. Glycosyltransferase that specifically catalyzes mannosylation of cytoplasmic tRNA(Asp) modified with queuosine at position 34 (queuosine(34)). Mannosylates the cyclopentene moiety of queuosine(34) in tRNA(Asp) to form mannosyl-queuosine(34). Mannosylation of queuosine(34) in tRNA(Asp) is required to slow-down elongation at cognate codons, GAC and GAU, thereby regulating protein translation. The sequence is that of tRNA-queuosine alpha-mannosyltransferase (GTDC1) from Bos taurus (Bovine).